The sequence spans 225 residues: Reticulon-like protein B9 (225 aa).

A Reticulon domain is found at 39–224; the sequence is VADILLWREP…PRGTVKNKKF (186 aa). A run of 3 helical transmembrane segments spans residues 50-70, 72-92, and 152-172; these read IAAT…VVEY, FITL…IWST, and YIVS…IGFV.

The protein localises to the endoplasmic reticulum membrane. The chain is Reticulon-like protein B9 (RTNLB9) from Arabidopsis thaliana (Mouse-ear cress).